The sequence spans 113 residues: UPF0122 protein MGAS10270_Spy1030 (113 aa).

It belongs to the UPF0122 family.

Its function is as follows. Might take part in the signal recognition particle (SRP) pathway. This is inferred from the conservation of its genetic proximity to ftsY/ffh. May be a regulatory protein. This Streptococcus pyogenes serotype M2 (strain MGAS10270) protein is UPF0122 protein MGAS10270_Spy1030.